A 130-amino-acid chain; its full sequence is Small ribosomal subunit protein uS9 (130 aa).

Positions 105-130 (TRDPRMKERKKYGLKGARRAPQFSKR) are disordered. Over residues 111–130 (KERKKYGLKGARRAPQFSKR) the composition is skewed to basic residues.

Belongs to the universal ribosomal protein uS9 family.

This chain is Small ribosomal subunit protein uS9, found in Bacillus pumilus (strain SAFR-032).